The following is a 187-amino-acid chain: Ribosome-recycling factor (187 aa).

Belongs to the RRF family.

The protein resides in the cytoplasm. Functionally, responsible for the release of ribosomes from messenger RNA at the termination of protein biosynthesis. May increase the efficiency of translation by recycling ribosomes from one round of translation to another. This Nitrosococcus oceani (strain ATCC 19707 / BCRC 17464 / JCM 30415 / NCIMB 11848 / C-107) protein is Ribosome-recycling factor.